The sequence spans 475 residues: MRNYTQQYINGEWIDSDSNETIEVINPATEEVIGKVAKGNSNDVEKAVEAANNVYLEFRHSSVKERKELLDKIVEEYKNRKQDIIEAITDELGAPLTLSENVHYQMGLNHFEEASRALDSFEFEERRGDALVTKEAIGVSGLVTPWNFPTNQTSLKLAAAFAAGSPVVLKPSEETPFAAVILAEIFDKVGVPKGVFNLVNGDGEGVGNPLSEHPKVRMMSFTGSGRTGSKIMEKASKDFKKVSLELGGKSPYIVLDDVDVKEAAKATTGKVVNNTGQVCTAGTRILIPESKKEDFLTALKEEFSKVKVGDPREEGTQVGPIISKKQFDTVQSYIDKGIEEGAELFYGGPGKPEGLNTGYFARPTIFINVDNDMTIAQEEIFGPVASVITYNNLDEAIKIANDTKYGLAGYVIGKDKETLQKVARSIEAGRIEINEAGNQPDLPFGGYKQSGIGREWGDYGIEEFLEVKSIAGYFS.

201–207 (GDGEGVG) serves as a coordination point for NAD(+). Active-site residues include Glu245 and Cys279.

This sequence belongs to the aldehyde dehydrogenase family.

It carries out the reaction an aldehyde + NAD(+) + H2O = a carboxylate + NADH + 2 H(+). The chain is Putative aldehyde dehydrogenase SH0913 from Staphylococcus haemolyticus (strain JCSC1435).